A 510-amino-acid polypeptide reads, in one-letter code: GMP synthase [glutamine-hydrolyzing] (510 aa).

One can recognise a Glutamine amidotransferase type-1 domain in the interval 5–195 (LVLILDFGGQ…LYEVCHCQGD (191 aa)). The active-site Nucleophile is cysteine 82. Active-site residues include histidine 169 and glutamate 171. The GMPS ATP-PPase domain occupies 196 to 385 (WTMENYIEKE…LGVPEEIVWR (190 aa)). An ATP-binding site is contributed by 223 to 229 (SGGVDSS).

Homodimer.

It catalyses the reaction XMP + L-glutamine + ATP + H2O = GMP + L-glutamate + AMP + diphosphate + 2 H(+). It functions in the pathway purine metabolism; GMP biosynthesis; GMP from XMP (L-Gln route): step 1/1. Functionally, catalyzes the synthesis of GMP from XMP. This Alkaliphilus metalliredigens (strain QYMF) protein is GMP synthase [glutamine-hydrolyzing].